A 273-amino-acid chain; its full sequence is NADPH-dependent 7-cyano-7-deazaguanine reductase (273 aa).

Residue 80 to 82 (IES) coordinates substrate. 82 to 83 (SK) is an NADPH binding site. Residue cysteine 180 is the Thioimide intermediate of the active site. Aspartate 187 (proton donor) is an active-site residue. 219-220 (HE) lines the substrate pocket. 248–249 (RG) is an NADPH binding site.

It belongs to the GTP cyclohydrolase I family. QueF type 2 subfamily. As to quaternary structure, homodimer.

It is found in the cytoplasm. It catalyses the reaction 7-aminomethyl-7-carbaguanine + 2 NADP(+) = 7-cyano-7-deazaguanine + 2 NADPH + 3 H(+). It participates in tRNA modification; tRNA-queuosine biosynthesis. Functionally, catalyzes the NADPH-dependent reduction of 7-cyano-7-deazaguanine (preQ0) to 7-aminomethyl-7-deazaguanine (preQ1). The chain is NADPH-dependent 7-cyano-7-deazaguanine reductase from Bordetella avium (strain 197N).